The following is a 51-amino-acid chain: Probable antitoxin PhoAT (51 aa).

Belongs to the PhoAT antitoxin family. Interacts with toxin PhoH2.

Antitoxin component of a type II toxin-antitoxin (TA) system. The cognate antitoxin is PhoAT; the toxin gene cannot be expressed in the absence of the antitoxin gene in M.smegmatis (strain mc(2)4517), and abrogates the toxic effects of PhoH2 in M.smegmatis strain mc(2)155. This chain is Probable antitoxin PhoAT, found in Mycobacterium tuberculosis (strain ATCC 25618 / H37Rv).